A 1167-amino-acid polypeptide reads, in one-letter code: ATP-dependent helicase/nuclease subunit A (1167 aa).

The 450-residue stretch at 2–451 (KNWTAEQMRA…IELSLNFRSR (450 aa)) folds into the UvrD-like helicase ATP-binding domain. 23 to 30 (AAAGAGKT) contacts ATP. The region spanning 478-768 (KAFLKKGADY…RVMSVHKSKG (291 aa)) is the UvrD-like helicase C-terminal domain.

Belongs to the helicase family. AddA subfamily. As to quaternary structure, heterodimer of AddA and AddB/RexB. Mg(2+) is required as a cofactor.

The catalysed reaction is Couples ATP hydrolysis with the unwinding of duplex DNA by translocating in the 3'-5' direction.. The enzyme catalyses ATP + H2O = ADP + phosphate + H(+). In terms of biological role, the heterodimer acts as both an ATP-dependent DNA helicase and an ATP-dependent, dual-direction single-stranded exonuclease. Recognizes the chi site generating a DNA molecule suitable for the initiation of homologous recombination. The AddA nuclease domain is required for chi fragment generation; this subunit has the helicase and 3' -&gt; 5' nuclease activities. The protein is ATP-dependent helicase/nuclease subunit A of Carboxydothermus hydrogenoformans (strain ATCC BAA-161 / DSM 6008 / Z-2901).